The following is a 361-amino-acid chain: Methionine import ATP-binding protein MetN (361 aa).

One can recognise an ABC transporter domain in the interval 22 to 257; sequence VRLIDVKRRF…PQTDITRSLL (236 aa). 54-61 is a binding site for ATP; that stretch reads GRSGAGKS.

It belongs to the ABC transporter superfamily. Methionine importer (TC 3.A.1.24) family. As to quaternary structure, the complex is composed of two ATP-binding proteins (MetN), two transmembrane proteins (MetI) and a solute-binding protein (MetQ).

The protein localises to the cell inner membrane. The catalysed reaction is L-methionine(out) + ATP + H2O = L-methionine(in) + ADP + phosphate + H(+). It catalyses the reaction D-methionine(out) + ATP + H2O = D-methionine(in) + ADP + phosphate + H(+). In terms of biological role, part of the ABC transporter complex MetNIQ involved in methionine import. Responsible for energy coupling to the transport system. In Rhizobium etli (strain ATCC 51251 / DSM 11541 / JCM 21823 / NBRC 15573 / CFN 42), this protein is Methionine import ATP-binding protein MetN.